The primary structure comprises 833 residues: Vacuolar protein sorting-associated protein 16 homolog (833 aa).

It belongs to the VPS16 family. Component of the homotypic fusion and vacuole protein sorting (HOPS) complex, composed of Vps16A, car/Vps33A, dor/Vps18, Vps39, Vps11 and lt/Vps41. Interacts with Syx17 (via SNARE domain); the interaction may involve multiple components of the HOPS complex and may promote assembly of the Syx17-Snap29-Vamp7 trans-SNARE complex. Component of the class C core vacuole/endosome tethering (CORVET) complex composed of at least Vps8, dor/Vps18, car/Vps33A and Vps16A; unlike in other species, Vps11 is not part of the Drosophila complex. Due to the reduced number of components the Drosophila CORVET complex is often referred to as the miniCORVET complex. The tethering complex core made up of Vps16A, car/Vps33A and dor/Vps18 and shared by both HOPS and CORVET, preferentially associates with CORVET-specific Vps8 over HOPS-specific lt/Vps41. Interacts with Rab2 (GTP-bound form).

It localises to the late endosome membrane. Its subcellular location is the lysosome membrane. The protein resides in the cytoplasmic vesicle. The protein localises to the autophagosome. In terms of biological role, core component of the class C core vacuole/endosome tethering (CORVET) and the homotypic fusion and vacuole protein sorting (HOPS) tethering complexes involved in endo-lysosomal vesicle trafficking and lysosome biogenesis. The CORVET complex facilitates docking and fusion of endosomal vesicles during endosome maturation, acts upstream of HOPS, but is not involved in autophagic flux. The CORVET complex may cooperate with the early endosomal tether Rbsn-5 to mediate endosomal fusion. The HOPS complex facilitates docking and fusion of lysosomes with late endosomes and several other types of vesicles. The HOPS complex is also involved in autophagy and crinophagy (the elimination of unused secretory granules through their fusion with lysosomes). The HOPS complex mediates autophagocitic flux, probably by binding autophagosome-associated Syx17/syntaxin 17, promoting assembly of the trans-SNARE complex and instigating autophagosome-lysosome fusion. Independent of Syx17/syntaxin 17, HOPS is involved in biosynthetic transport to lysosomes and lysosome-related organelles such as eye-pigment granules. Required for endocytic degradation of boss/bride of sevenless and N/Notch in developing ommatidia. This is Vacuolar protein sorting-associated protein 16 homolog from Drosophila melanogaster (Fruit fly).